The following is a 238-amino-acid chain: Large ribosomal subunit protein uL5c (238 aa).

The protein belongs to the universal ribosomal protein uL5 family. In terms of assembly, part of the 50S ribosomal subunit; contacts the 5S rRNA.

It is found in the plastid. Its subcellular location is the chloroplast. Functionally, binds 5S rRNA, forms part of the central protuberance of the 50S subunit. In Trieres chinensis (Marine centric diatom), this protein is Large ribosomal subunit protein uL5c (rpl5).